A 668-amino-acid polypeptide reads, in one-letter code: Golgin subfamily A member 6-like protein 1 (668 aa).

5 disordered regions span residues 1-120 (MLMW…HQEA), 323-356 (IREQ…RQEE), 384-466 (EKMH…EMWR), 481-591 (KEKM…REQE), and 603-639 (EQEE…MRRQ). Residues 15–41 (LPTHPHLPTHPHLPTHPHLPTHPHLPT) show a composition bias toward basic residues. Basic and acidic residues predominate over residues 51 to 72 (MSKETRQSKLAEAKEQLTDHHP). 2 stretches are compositionally biased toward polar residues: residues 73–83 (QTNPSVGTAAS) and 91–103 (NNGT…TSGG). Residues 106–120 (SPEDEQKASHQHQEA) show a composition bias toward basic and acidic residues. The stretch at 177–663 (LEQALSAVAT…EEKMQEHQEH (487 aa)) forms a coiled coil.

Belongs to the GOLGA6 family.

In Homo sapiens (Human), this protein is Golgin subfamily A member 6-like protein 1 (GOLGA6L1).